A 1342-amino-acid polypeptide reads, in one-letter code: DNA-directed RNA polymerase subunit beta (1342 aa).

The protein belongs to the RNA polymerase beta chain family. The RNAP catalytic core consists of 2 alpha, 1 beta, 1 beta' and 1 omega subunit. When a sigma factor is associated with the core the holoenzyme is formed, which can initiate transcription.

The catalysed reaction is RNA(n) + a ribonucleoside 5'-triphosphate = RNA(n+1) + diphosphate. Functionally, DNA-dependent RNA polymerase catalyzes the transcription of DNA into RNA using the four ribonucleoside triphosphates as substrates. The polypeptide is DNA-directed RNA polymerase subunit beta (Salmonella typhi).